Reading from the N-terminus, the 458-residue chain is Divalent metal cation transporter MntH (458 aa).

11 consecutive transmembrane segments (helical) span residues 38-58 (GFWKTLAAYTGPGILVAVGYM), 76-96 (SLLSVILISSLIAMLLQAMAA), 119-139 (GGFLWVITELAIMATDIAEII), 151-171 (MPLIVGIIITTADVLILLLLM), 180-200 (AVVATLVLVILLVFAYEVILA), 223-243 (MLYLSLGIVGATVMPHDLFLG), 275-295 (LTMAFIVNSLLLILGAALFFG), 315-335 (IVGAIASPMLSMLFAVALLAS), 370-390 (LMSVTPVLIFAIYYHGNEAKI), 393-413 (LLTFSQVFLSIALPFAVIPLV), and 437-457 (FISGVLIILNLYLIAQTLGFV).

It belongs to the NRAMP family.

The protein localises to the cell membrane. H(+)-stimulated, divalent metal cation uptake system. In Lacticaseibacillus paracasei (strain ATCC 334 / BCRC 17002 / CCUG 31169 / CIP 107868 / KCTC 3260 / NRRL B-441) (Lactobacillus paracasei), this protein is Divalent metal cation transporter MntH.